A 279-amino-acid chain; its full sequence is MHFVKMHGLGNDFVLVNAMTEKVPGDLPGLARRVCHRRFGIGADGLILVLPSEQARLRMRIFNPDGSEPEMCGNGIRCFARYVYETGLAEGEELQVETLAGIIKPRLILEGGRVAGVRVDMGAPHLEREQIPMAGTGSPVLDEPIEVNGETWRGTCVSMGNPHCVFFVEDVTGAPVTTVGPVVEHHPLFPRRTNVEFIQVLNREELRMRVWERGAGETMACGTGACAAAVAGALTGRSNRKVTVHLAAGDLQIEWSPVDNHVYMTGPAVEVFRGDFPLD.

Residues asparagine 11 and asparagine 63 each coordinate substrate. The Proton donor role is filled by cysteine 72. Substrate-binding positions include glycine 73–asparagine 74, asparagine 161, asparagine 194, and glutamate 212–arginine 213. Cysteine 221 acts as the Proton acceptor in catalysis. Position 222 to 223 (glycine 222 to threonine 223) interacts with substrate.

Belongs to the diaminopimelate epimerase family. In terms of assembly, homodimer.

It is found in the cytoplasm. It carries out the reaction (2S,6S)-2,6-diaminopimelate = meso-2,6-diaminopimelate. It functions in the pathway amino-acid biosynthesis; L-lysine biosynthesis via DAP pathway; DL-2,6-diaminopimelate from LL-2,6-diaminopimelate: step 1/1. In terms of biological role, catalyzes the stereoinversion of LL-2,6-diaminopimelate (L,L-DAP) to meso-diaminopimelate (meso-DAP), a precursor of L-lysine and an essential component of the bacterial peptidoglycan. This chain is Diaminopimelate epimerase, found in Moorella thermoacetica (strain ATCC 39073 / JCM 9320).